The following is a 581-amino-acid chain: 4-hydroxy-3-methylbut-2-en-1-yl diphosphate synthase (flavodoxin) (581 aa).

[4Fe-4S] cluster is bound by residues cysteine 489, cysteine 492, cysteine 523, and glutamate 530.

Belongs to the IspG family. [4Fe-4S] cluster serves as cofactor.

It catalyses the reaction (2E)-4-hydroxy-3-methylbut-2-enyl diphosphate + oxidized [flavodoxin] + H2O + 2 H(+) = 2-C-methyl-D-erythritol 2,4-cyclic diphosphate + reduced [flavodoxin]. The protein operates within isoprenoid biosynthesis; isopentenyl diphosphate biosynthesis via DXP pathway; isopentenyl diphosphate from 1-deoxy-D-xylulose 5-phosphate: step 5/6. Functionally, converts 2C-methyl-D-erythritol 2,4-cyclodiphosphate (ME-2,4cPP) into 1-hydroxy-2-methyl-2-(E)-butenyl 4-diphosphate. The polypeptide is 4-hydroxy-3-methylbut-2-en-1-yl diphosphate synthase (flavodoxin) (Porphyromonas gingivalis (strain ATCC BAA-308 / W83)).